We begin with the raw amino-acid sequence, 269 residues long: MEDKNSVIVFKNVSFQYQSDASFTLKDVSFNIPKGQWTSIVGHNGSGKSTIAKLMIGIEKVKSGEIFYNNQAITDDNFEKLRKDIGIVFQNPDNQFVGSIVKYDVAFGLENHAVPHDEMHRRVSEALEQVDMLERADYEPNALSGGQKQRVAIASVLALNPSVIILDEATSMLDPDARQNLLDLVRKVKSEHNITIISITHDLSEAMEADHVIVMNKGTVYKEGTATEIFDHAEELTTIGLDLPFPIKINQMLGHQTSFLTYEGLVDQL.

The 235-residue stretch at 8–242 folds into the ABC transporter domain; that stretch reads IVFKNVSFQY…AEELTTIGLD (235 aa). 42 to 49 provides a ligand contact to ATP; it reads GHNGSGKS.

The protein belongs to the ABC transporter superfamily. Energy-coupling factor EcfA family. As to quaternary structure, forms a stable energy-coupling factor (ECF) transporter complex composed of 2 membrane-embedded substrate-binding proteins (S component), 2 ATP-binding proteins (A component) and 2 transmembrane proteins (T component).

Its subcellular location is the cell membrane. In terms of biological role, ATP-binding (A) component of a common energy-coupling factor (ECF) ABC-transporter complex. Unlike classic ABC transporters this ECF transporter provides the energy necessary to transport a number of different substrates. The protein is Energy-coupling factor transporter ATP-binding protein EcfA1 of Staphylococcus aureus (strain MRSA252).